The sequence spans 695 residues: WD repeat-containing protein 93 (695 aa).

The interval 1–35 is disordered; sequence MSSFKGNQAQKRRLSVFPKGPLEIPSPTEADWPKD. Residues 421-460 form a WD repeat; that stretch reads PCAAPIVMSQISSFSSYLALVCEDGVLILWDLAEGFLFGV.

In terms of tissue distribution, testis-specific. Expressed in spermatogonia, spermatocytes and spermatids.

The sequence is that of WD repeat-containing protein 93 (Wdr93) from Mus musculus (Mouse).